We begin with the raw amino-acid sequence, 2434 residues long: ATP-binding cassette sub-family A member 2 (2434 aa).

N14 is a glycosylation site (N-linked (GlcNAc...) asparagine). The next 2 membrane-spanning stretches (helical) occupy residues P22–L42 and A54–C74. N-linked (GlcNAc...) asparagine glycans are attached at residues N89, N168, and N173. An N5-methylglutamine modification is found at Q271. N305, N368, N379, N420, N432, N476, N484, N494, N530, N549, N590, N600, and N628 each carry an N-linked (GlcNAc...) asparagine glycan. Over residues R354 to S369 the composition is skewed to low complexity. The segment at R354–D396 is disordered. Over residues T370–D396 the composition is skewed to polar residues. The next 6 helical transmembrane spans lie at F699 to V719, V750 to I770, V782 to L802, A813 to I833, A857 to W877, and L893 to I913. Positions V990–V1221 constitute an ABC transporter 1 domain. G1024–T1031 is an ATP binding site. The tract at residues A1225–S1246 is disordered. Positions G1228–S1246 are enriched in polar residues. At S1238 the chain carries Phosphoserine. N-linked (GlcNAc...) asparagine glycosylation occurs at N1247. A phosphoserine mark is found at S1327 and S1331. Residues I1461–I1481 traverse the membrane as a helical segment. N1496, N1549, and N1557 each carry an N-linked (GlcNAc...) asparagine glycan. The segment at N1587–E1606 is disordered. The segment covering V1589–S1598 has biased composition (pro residues). N-linked (GlcNAc...) asparagine glycans are attached at residues N1613, N1678, and N1776. The next 5 helical transmembrane spans lie at V1793–F1813, V1842–F1862, F1873–P1893, V1906–L1926, and G1992–Y2012. In terms of domain architecture, ABC transporter 2 spans V2051–R2286. N-linked (GlcNAc...) asparagine glycosylation is present at N2055. An ATP-binding site is contributed by G2088–T2095. T2411 bears the Phosphothreonine mark.

The protein belongs to the ABC transporter superfamily. ABCA family. Post-translationally, N-glycosylated. In terms of processing, methylated at Gln-271 by N6AMT1. In terms of tissue distribution, expressed at high levels in brain, at moderate levels in heart, kidney and lung, and at low levels in skeletal muscle, stomach, spleen, colon and pancreas. Not detected in the liver or small intestine. In brain, highly expressed in white matter and detected in oligodendrocytes. Expressed in cerebellum as well as the anterior commissure. Expressed mainly in the white matter but is also scattered in gray matter throughout the whole brain. Expressed in myelinating cells of both ventral and dorsal restricted regions in newborn spinal cord. Expressed in non-myelin-forming as well as in myelin-forming Schwann cells in the sciatic nerve.

It is found in the endosome membrane. Its subcellular location is the lysosome membrane. Its function is as follows. Probable transporter, its natural substrate has not been found yet. May have a role in macrophage lipid metabolism and neural development. May play a role in myelination, perhaps as a transporter for certain kinds of myelin chemical components. May play an important role in gamma-secretase processing of APP and thus in amyloid-beta peptide generation. Regulates esterification of plasma membrane cholesterol by modulation of sphingolipid metabolism. In terms of biological role, probable lipid transporter that modulates cholesterol sequestration in the late endosome/lysosome by regulating the intracellular sphingolipid metabolism, in turn participates in cholesterol homeostasis. May alter the transbilayer distribution of ceramide in the intraluminal membrane lipid bilayer, favoring its retention in the outer leaflet that results in increased acid ceramidase activity in the late endosome/lysosome, facilitating ceramide deacylation to sphingosine leading to the sequestration of free cholesterol in lysosomes. In addition regulates amyloid-beta production either by activating a signaling pathway that regulates amyloid precursor protein transcription through the modulation of sphingolipid metabolism or through its role in gamma-secretase processing of APP. May play a role in myelin formation. This is ATP-binding cassette sub-family A member 2 from Rattus norvegicus (Rat).